Reading from the N-terminus, the 609-residue chain is Membrane protein insertase YidC (609 aa).

5 consecutive transmembrane segments (helical) span residues 8–28, 381–401, 451–471, 509–529, and 545–565; these read LILA…LFPP, MGWS…PLAL, LPIL…FVTI, SLTA…SMWL, and IFAW…SGLV.

The protein belongs to the OXA1/ALB3/YidC family. Type 1 subfamily. As to quaternary structure, interacts with the Sec translocase complex via SecD. Specifically interacts with transmembrane segments of nascent integral membrane proteins during membrane integration.

It is found in the cell inner membrane. Functionally, required for the insertion and/or proper folding and/or complex formation of integral membrane proteins into the membrane. Involved in integration of membrane proteins that insert both dependently and independently of the Sec translocase complex, as well as at least some lipoproteins. Aids folding of multispanning membrane proteins. The protein is Membrane protein insertase YidC of Ruegeria pomeroyi (strain ATCC 700808 / DSM 15171 / DSS-3) (Silicibacter pomeroyi).